We begin with the raw amino-acid sequence, 312 residues long: Prephenate dehydratase (312 aa).

In terms of domain architecture, Prephenate dehydratase spans 3 to 194; it reads GIAYLGPEGT…ARTRFVLVGR (192 aa). The ACT domain maps to 208 to 285; sequence SVVLQLDNVP…ADVRYLGSWP (78 aa). The segment at 291–312 is disordered; the sequence is GAAPPPMDESASWLEGLREGRP.

In terms of assembly, homodimer.

It catalyses the reaction prephenate + H(+) = 3-phenylpyruvate + CO2 + H2O. The protein operates within amino-acid biosynthesis; L-phenylalanine biosynthesis; phenylpyruvate from prephenate: step 1/1. The polypeptide is Prephenate dehydratase (pheA) (Mycolicibacterium vanbaalenii (strain DSM 7251 / JCM 13017 / BCRC 16820 / KCTC 9966 / NRRL B-24157 / PYR-1) (Mycobacterium vanbaalenii)).